Here is a 239-residue protein sequence, read N- to C-terminus: Aspartate/glutamate leucyltransferase (239 aa).

This sequence belongs to the R-transferase family. Bpt subfamily.

Its subcellular location is the cytoplasm. The catalysed reaction is N-terminal L-glutamyl-[protein] + L-leucyl-tRNA(Leu) = N-terminal L-leucyl-L-glutamyl-[protein] + tRNA(Leu) + H(+). It carries out the reaction N-terminal L-aspartyl-[protein] + L-leucyl-tRNA(Leu) = N-terminal L-leucyl-L-aspartyl-[protein] + tRNA(Leu) + H(+). Functions in the N-end rule pathway of protein degradation where it conjugates Leu from its aminoacyl-tRNA to the N-termini of proteins containing an N-terminal aspartate or glutamate. This Campylobacter jejuni (strain RM1221) protein is Aspartate/glutamate leucyltransferase.